We begin with the raw amino-acid sequence, 472 residues long: Karilysin (472 aa).

An N-terminal signal peptide occupies residues 1–20; it reads MKRFILLFFLSTIAIFKVYS. Positions 21–34 are cleaved as a propeptide — activation peptide; the sequence is QRLYDNGPLTGDNN. Zn(2+) is bound by residues His-102, Asp-104, His-117, His-133, and His-155. Catalysis depends on Glu-156, which acts as the Proton donor/acceptor. Residues His-159 and His-165 each contribute to the Zn(2+) site. The propeptide at 196 to 386 is removed in short form; the sequence is YGYPFSISGP…AVSCSRTISP (191 aa). Positions 387 to 472 are cleaved as a propeptide — removed in long form; the sequence is FTLSPNPATD…QTYTQKLIKK (86 aa).

It belongs to the peptidase M10A family. Requires Zn(2+) as cofactor. Processes itself into the mature 18-kDa enzyme (Kly18) through sequential autoproteolytic cleavage at both the N- and C-termini. However, the maturation intermediate Kly38 is found to be more active than Kly18 and the rate for its processing is slow, which raises the question as to whether Kly38 is a physiologically relevant entity.

The protein resides in the secreted. Autoprocessing and proteolytic activity are completely inhibited by EDTA and 1,10-phenanthroline in vitro. Proteolytic activity is 3-fold enhanced by Ca(2+) due to stabilization of the protein structure but inhibited by an excess of Zn(2+). Inhibitory studies of karilysin identified several phage display-selected peptides with apparent inhibition constants (Ki) in the micromolar range, among which is the tetrapeptide SWFP (Ki=10.7 uM). Its function is as follows. Metalloprotease able to cleave casein, gelatin, elastin, fibrinogen and fibronectin. Shows exclusive preference for hydrophobic residues, especially Leu, Tyr and Met, at the P1' position of substrates, and for Pro or Ala at P3. Can efficiently cleave the antimicrobial peptide LL-37 which is a component of the immune system, leading to a significant reduction of its bactericidal activity. Is also able to inhibit all pathways of the human complement system. The classical and lectin complement pathways are inhibited because of the efficient degradation of mannose-binding lectin, ficolin-2, ficolin-3, and C4 by karilysin, whereas inhibition of the terminal pathway is caused by cleavage of C5. Thus, karilysin appears to be a major virulence factor of T.forsythia that contributes to evasion of the human immune response and periodontal disease. Seems to act synergistically with gingipains from the periodontal pathogen P.gingivalis present at the same sites of infection. The polypeptide is Karilysin (kly) (Tannerella forsythia (strain ATCC 43037 / JCM 10827 / CCUG 21028 A / KCTC 5666 / FDC 338) (Bacteroides forsythus)).